The chain runs to 349 residues: tRNA N6-adenosine threonylcarbamoyltransferase (349 aa).

Residues His-113 and His-117 each coordinate Fe cation. Residues Leu-135–Gly-139, Asp-169, Gly-182, Asp-186, and Asn-281 contribute to the substrate site. Position 309 (Asp-309) interacts with Fe cation.

The protein belongs to the KAE1 / TsaD family. Fe(2+) serves as cofactor.

Its subcellular location is the cytoplasm. The enzyme catalyses L-threonylcarbamoyladenylate + adenosine(37) in tRNA = N(6)-L-threonylcarbamoyladenosine(37) in tRNA + AMP + H(+). In terms of biological role, required for the formation of a threonylcarbamoyl group on adenosine at position 37 (t(6)A37) in tRNAs that read codons beginning with adenine. Is involved in the transfer of the threonylcarbamoyl moiety of threonylcarbamoyl-AMP (TC-AMP) to the N6 group of A37, together with TsaE and TsaB. TsaD likely plays a direct catalytic role in this reaction. The polypeptide is tRNA N6-adenosine threonylcarbamoyltransferase (Corynebacterium aurimucosum (strain ATCC 700975 / DSM 44827 / CIP 107346 / CN-1) (Corynebacterium nigricans)).